Consider the following 263-residue polypeptide: Flagellar brake protein YcgR (263 aa).

Positions 1 to 21 are disordered; sequence MAELSTPSPASPAPLDGGRGD. The PilZ domain maps to 133–250; it reads QRREFYRLQV…DTRIQRYIFK (118 aa).

Belongs to the YcgR family. As to quaternary structure, monomer. Interacts with the flagellar basal bodies.

It localises to the bacterial flagellum basal body. Its function is as follows. Acts as a flagellar brake, regulating swimming and swarming in a bis-(3'-5') cyclic diguanylic acid (c-di-GMP)-dependent manner. Binds 1 c-di-GMP dimer per subunit. Increasing levels of c-di-GMP lead to decreased motility. In Thauera aminoaromatica, this protein is Flagellar brake protein YcgR.